The primary structure comprises 204 residues: LexA repressor (204 aa).

Residues 31–51 constitute a DNA-binding region (H-T-H motif); sequence VREICAKVGLSSTSTVHGHLS. Catalysis depends on for autocatalytic cleavage activity residues serine 128 and lysine 165.

It belongs to the peptidase S24 family. In terms of assembly, homodimer.

The enzyme catalyses Hydrolysis of Ala-|-Gly bond in repressor LexA.. Its function is as follows. Represses a number of genes involved in the response to DNA damage (SOS response), including recA and lexA. In the presence of single-stranded DNA, RecA interacts with LexA causing an autocatalytic cleavage which disrupts the DNA-binding part of LexA, leading to derepression of the SOS regulon and eventually DNA repair. The protein is LexA repressor of Clostridium acetobutylicum (strain ATCC 824 / DSM 792 / JCM 1419 / IAM 19013 / LMG 5710 / NBRC 13948 / NRRL B-527 / VKM B-1787 / 2291 / W).